The primary structure comprises 565 residues: Granule-bound starch synthase 1b, chloroplastic/amyloplastic (565 aa).

A chloroplast-targeting transit peptide spans 1 to 34 (VFLSMRNKTQLAKRRATNYETHRNSSRTSSPIVC). K52 serves as a coordination point for ADP-alpha-D-glucose.

The protein belongs to the glycosyltransferase 1 family. Bacterial/plant glycogen synthase subfamily.

Its subcellular location is the plastid. The protein resides in the chloroplast. The protein localises to the amyloplast. It catalyses the reaction an NDP-alpha-D-glucose + [(1-&gt;4)-alpha-D-glucosyl](n) = [(1-&gt;4)-alpha-D-glucosyl](n+1) + a ribonucleoside 5'-diphosphate + H(+). Its pathway is glycan biosynthesis; starch biosynthesis. Functionally, involved in the synthesis of amylose in endosperm. This is Granule-bound starch synthase 1b, chloroplastic/amyloplastic from Hordeum vulgare (Barley).